Reading from the N-terminus, the 287-residue chain is Urease accessory protein UreD (287 aa).

The protein belongs to the UreD family. In terms of assembly, ureD, UreF and UreG form a complex that acts as a GTP-hydrolysis-dependent molecular chaperone, activating the urease apoprotein by helping to assemble the nickel containing metallocenter of UreC. The UreE protein probably delivers the nickel.

The protein localises to the cytoplasm. Required for maturation of urease via the functional incorporation of the urease nickel metallocenter. The chain is Urease accessory protein UreD from Aliivibrio fischeri (strain ATCC 700601 / ES114) (Vibrio fischeri).